The sequence spans 622 residues: Leucine-rich repeat-containing protein 70 (622 aa).

Residues 1–31 form the signal peptide; it reads MCGLQFSLPCLRLFLVVTCYLLLLLHKEILG. The region spanning 32–60 is the LRRNT domain; it reads CSSVCQLCTGRQINCRNLGLSSIPKNFPE. 12 LRR repeats span residues 61-82, 85-106, 109-130, 133-154, 157-178, 181-202, 205-226, 229-250, 253-274, 277-298, 301-322, and 326-347; these read STVF…ELTG, SLVA…AFVQ, HLYF…IFKG, NLRN…VFND, SVQY…TFVG, ALRI…GFQH, NLAC…AFEV, SLRR…AFKG, NLEY…GFSG, NLKH…TFSL, NLIY…TFEN, and SLKI…VLKP. An N-linked (GlcNAc...) asparagine glycan is attached at asparagine 215. A glycan (N-linked (GlcNAc...) asparagine) is linked at asparagine 266. Residues asparagine 331 and asparagine 400 are each glycosylated (N-linked (GlcNAc...) asparagine). The region spanning 359–406 is the LRRCT domain; sequence NPWECNCKLLGLRDWLASSAITLNIYCQNPPSMRGRALRYINITNCVT. Residues 527 to 547 traverse the membrane as a helical segment; that stretch reads AFDILLAFFILACVLIIFLIY.

As to expression, expressed at low levels in many tissues, including smooth muscle, brain, uterus, pancreas, cartilage, adipose, spleen and testis.

The protein localises to the membrane. In terms of biological role, renders cells highly sensitive to the activation by cytokines and lipopolysaccharide (LPS). In Homo sapiens (Human), this protein is Leucine-rich repeat-containing protein 70 (LRRC70).